The sequence spans 340 residues: Entry-fusion complex protein OPG094 (340 aa).

The segment at 1–20 (MGGGVSVELPKRDPPPGVPT) is disordered. Residue Gly-2 is the site of N-myristoyl glycine; by host attachment. At 2–319 (GGGVSVELPK…VQHNIKHSFD (318 aa)) the chain is on the virion surface side. The helical; Signal-anchor for type II membrane protein transmembrane segment at 320-340 (LKLHLISLLSLLVIWILIVAI) threads the bilayer.

This sequence belongs to the orthopoxvirus OPG086 family. As to quaternary structure, interacts with OPG143. Component of the entry fusion complex (EFC) composed of OPG053, OPG076, OPG086, OPG094, OPG095, OPG099, OPG107, OPG143, OPG104, OPG147 and OPG155. Except for OPG095 and OPG053, each of the EFC proteins is required for assembly or stability of the complex. Post-translationally, unglycosylated because produced in viral factories instead of the classic ER -Golgi route.

Its subcellular location is the virion membrane. Component of the entry fusion complex (EFC), which consists of 11 proteins. During cell infection, this complex mediates entry of the virion core into the host cytoplasm by a two-step mechanism consisting of lipid mixing of the viral and cellular membranes and subsequent pore formation. This is Entry-fusion complex protein OPG094 (OPG094) from Cynomys gunnisoni (Gunnison's prairie dog).